We begin with the raw amino-acid sequence, 252 residues long: Carboxy-S-adenosyl-L-methionine synthase (252 aa).

Residues Tyr-45, 70–72, 95–96, 127–128, Asn-142, and Arg-209 contribute to the S-adenosyl-L-methionine site; these read GCS, DN, and DI.

This sequence belongs to the class I-like SAM-binding methyltransferase superfamily. Cx-SAM synthase family. Homodimer.

The catalysed reaction is prephenate + S-adenosyl-L-methionine = carboxy-S-adenosyl-L-methionine + 3-phenylpyruvate + H2O. In terms of biological role, catalyzes the conversion of S-adenosyl-L-methionine (SAM) to carboxy-S-adenosyl-L-methionine (Cx-SAM). The chain is Carboxy-S-adenosyl-L-methionine synthase from Pseudomonas paraeruginosa (strain DSM 24068 / PA7) (Pseudomonas aeruginosa (strain PA7)).